We begin with the raw amino-acid sequence, 424 residues long: Zona pellucida sperm-binding protein 3 (424 aa).

The signal sequence occupies residues 1-22 (MGLSYGLFICFLLWAGTGLCYP). Topologically, residues 23-383 (PTTTEDKTHP…VEGSTSPHTS (361 aa)) are extracellular. A ZP domain is found at 43-305 (ECRHAWLVVN…KACSFIKSSN (263 aa)). Disulfide bonds link Cys-44-Cys-138 and Cys-76-Cys-97. N-linked (GlcNAc...) asparagine glycosylation occurs at Asn-52. N-linked (GlcNAc...) asparagine glycans are attached at residues Asn-123 and Asn-145. 3 O-linked (GalNAc...) threonine glycosylation sites follow: Thr-154, Thr-160, and Thr-161. Cystine bridges form between Cys-215–Cys-280 and Cys-237–Cys-298. A propeptide spans 349 to 424 (RRHVTEEADI…PMICPVSASQ (76 aa)) (removed in mature form). A helical membrane pass occupies residues 384–404 (VMVGIGLATVLSLTLATIVLG). Topologically, residues 405–424 (LARRHHTASRPMICPVSASQ) are cytoplasmic.

It belongs to the ZP domain family. ZPC subfamily. Polymers of ZP2 and ZP3 organized into long filaments cross-linked by ZP1 homodimers. Interacts with ZP1 and ZP2. Proteolytically cleaved before the transmembrane segment to yield the secreted ectodomain incorporated in the zona pellucida. Post-translationally, N-glycosylated. In terms of processing, O-glycosylated; removal of O-linked glycans may play an important role in the post-fertilization block to polyspermy. Expressed in oocytes.

Its subcellular location is the zona pellucida. It is found in the cell membrane. Component of the zona pellucida, an extracellular matrix surrounding oocytes which mediates sperm binding, induction of the acrosome reaction and prevents post-fertilization polyspermy. The zona pellucida is composed of 3 to 4 glycoproteins, ZP1, ZP2, ZP3, and ZP4. ZP3 is essential for sperm binding and zona matrix formation. The chain is Zona pellucida sperm-binding protein 3 (ZP3) from Felis catus (Cat).